Here is a 346-residue protein sequence, read N- to C-terminus: Large ribosomal subunit protein uL10 (346 aa).

The segment at 307–346 is disordered; it reads AAAVAKEPEKKEEVKEEEEEEEEEDHSEEDGMAGLGSLFG. A compositionally biased stretch (acidic residues) spans 321 to 337; it reads KEEEEEEEEEDHSEEDG.

Belongs to the universal ribosomal protein uL10 family. Part of the 50S ribosomal subunit. Forms part of the ribosomal stalk which helps the ribosome interact with GTP-bound translation factors. Forms both a pentameric L10(L12)2(L12)2 and heptameric L10(L12)2(L12)2(L12)2 complex, where L10 forms an elongated spine to which the L12 dimers bind in a sequential fashion. The proportion of heptameric complexes increases during cell growth.

Its function is as follows. Forms part of the ribosomal stalk, playing a central role in the interaction of the ribosome with GTP-bound translation factors. The chain is Large ribosomal subunit protein uL10 from Methanosarcina barkeri (strain Fusaro / DSM 804).